The chain runs to 420 residues: Tyrosine--tRNA ligase (420 aa).

Residue Y33 participates in L-tyrosine binding. The 'HIGH' region motif lies at 38–47 (PTGDSLHAGH). L-tyrosine-binding residues include Y167 and Q171. The 'KMSKS' region signature appears at 227–231 (KFGKS). Position 230 (K230) interacts with ATP. The S4 RNA-binding domain occupies 352–418 (PTIIDLLIGA…GKKNFAGVKY (67 aa)).

Belongs to the class-I aminoacyl-tRNA synthetase family. TyrS type 1 subfamily. Homodimer.

It is found in the cytoplasm. The enzyme catalyses tRNA(Tyr) + L-tyrosine + ATP = L-tyrosyl-tRNA(Tyr) + AMP + diphosphate + H(+). Functionally, catalyzes the attachment of tyrosine to tRNA(Tyr) in a two-step reaction: tyrosine is first activated by ATP to form Tyr-AMP and then transferred to the acceptor end of tRNA(Tyr). This chain is Tyrosine--tRNA ligase, found in Corynebacterium diphtheriae (strain ATCC 700971 / NCTC 13129 / Biotype gravis).